A 191-amino-acid polypeptide reads, in one-letter code: Adenylate kinase (191 aa).

Gly-12 to Thr-17 provides a ligand contact to ATP. The segment at Ser-34–Val-63 is NMP. AMP is bound by residues Thr-35, Arg-40, Glu-61–Val-63, Gly-88–Arg-91, and Gln-95. Residues Gly-130–Asp-136 are LID. ATP is bound at residue Arg-131. Residues Arg-133 and Arg-145 each coordinate AMP. An ATP-binding site is contributed by Arg-173.

It belongs to the adenylate kinase family. Monomer.

The protein resides in the cytoplasm. The catalysed reaction is AMP + ATP = 2 ADP. Its pathway is purine metabolism; AMP biosynthesis via salvage pathway; AMP from ADP: step 1/1. Functionally, catalyzes the reversible transfer of the terminal phosphate group between ATP and AMP. Plays an important role in cellular energy homeostasis and in adenine nucleotide metabolism. In Helicobacter pylori (strain ATCC 700392 / 26695) (Campylobacter pylori), this protein is Adenylate kinase.